A 261-amino-acid polypeptide reads, in one-letter code: Adenosylcobinamide-GDP ribazoletransferase (261 aa).

5 consecutive transmembrane segments (helical) span residues 12 to 32 (NLFFVAMSFFTRIPVPSWVVI), 46 to 66 (LVGLLIGLICALVFWLAQLIL), 67 to 87 (PASIAILLAMVAGVLVTGAFH), 120 to 140 (GALSLGLVLLLKWQLLVELAL), and 199 to 219 (IFVLLWLNGVAAFVLFITLWL).

The protein belongs to the CobS family. Mg(2+) serves as cofactor.

It localises to the cell inner membrane. The enzyme catalyses alpha-ribazole + adenosylcob(III)inamide-GDP = adenosylcob(III)alamin + GMP + H(+). It carries out the reaction alpha-ribazole 5'-phosphate + adenosylcob(III)inamide-GDP = adenosylcob(III)alamin 5'-phosphate + GMP + H(+). It functions in the pathway cofactor biosynthesis; adenosylcobalamin biosynthesis; adenosylcobalamin from cob(II)yrinate a,c-diamide: step 7/7. Its function is as follows. Joins adenosylcobinamide-GDP and alpha-ribazole to generate adenosylcobalamin (Ado-cobalamin). Also synthesizes adenosylcobalamin 5'-phosphate from adenosylcobinamide-GDP and alpha-ribazole 5'-phosphate. This Shewanella frigidimarina (strain NCIMB 400) protein is Adenosylcobinamide-GDP ribazoletransferase.